The primary structure comprises 399 residues: Alpha-tubulin N-acetyltransferase (399 aa).

An N-acetyltransferase domain is found at 1-178 (MEFNFIINKL…NNFVVFDQYF (178 aa)). Acetyl-CoA contacts are provided by residues 112-125 (FYVH…GYGK) and 148-157 (SPKLIAFLKK). A compositionally biased stretch (polar residues) spans 183 to 193 (SSQNKQNQNTR). The segment at 183–223 (SSQNKQNQNTRSYSQPYSDYSSQIPTNYPQQQQQQSNSKSY) is disordered. The span at 194-223 (SYSQPYSDYSSQIPTNYPQQQQQQSNSKSY) shows a compositional bias: low complexity.

It belongs to the acetyltransferase ATAT1 family.

It catalyses the reaction L-lysyl-[alpha-tubulin] + acetyl-CoA = N(6)-acetyl-L-lysyl-[alpha-tubulin] + CoA + H(+). Functionally, specifically acetylates 'Lys-40' in alpha-tubulin on the lumenal side of microtubules. Promotes microtubule destabilization and accelerates microtubule dynamics; this activity may be independent of acetylation activity. Acetylates alpha-tubulin with a slow enzymatic rate, due to a catalytic site that is not optimized for acetyl transfer. Enters the microtubule through each end and diffuses quickly throughout the lumen of microtubules. Acetylates only long/old microtubules because of its slow acetylation rate since it does not have time to act on dynamically unstable microtubules before the enzyme is released. The chain is Alpha-tubulin N-acetyltransferase from Tetrahymena thermophila (strain SB210).